Here is a 79-residue protein sequence, read N- to C-terminus: Small ribosomal subunit protein uS17 (79 aa).

Belongs to the universal ribosomal protein uS17 family. In terms of assembly, part of the 30S ribosomal subunit.

Its function is as follows. One of the primary rRNA binding proteins, it binds specifically to the 5'-end of 16S ribosomal RNA. In Bartonella quintana (strain Toulouse) (Rochalimaea quintana), this protein is Small ribosomal subunit protein uS17.